The following is a 272-amino-acid chain: Indole-3-glycerol phosphate synthase (272 aa).

Belongs to the TrpC family.

It catalyses the reaction 1-(2-carboxyphenylamino)-1-deoxy-D-ribulose 5-phosphate + H(+) = (1S,2R)-1-C-(indol-3-yl)glycerol 3-phosphate + CO2 + H2O. It participates in amino-acid biosynthesis; L-tryptophan biosynthesis; L-tryptophan from chorismate: step 4/5. The sequence is that of Indole-3-glycerol phosphate synthase from Arthrobacter sp. (strain FB24).